Here is a 120-residue protein sequence, read N- to C-terminus: NAD(P)H-quinone oxidoreductase subunit 3, chloroplastic (120 aa).

3 consecutive transmembrane segments (helical) span residues 10 to 30 (LWFF…ISEI), 64 to 84 (MFAL…PWAI), and 89 to 109 (LGIS…VGLV).

It belongs to the complex I subunit 3 family. In terms of assembly, NDH is composed of at least 16 different subunits, 5 of which are encoded in the nucleus.

The protein resides in the plastid. It localises to the chloroplast thylakoid membrane. The catalysed reaction is a plastoquinone + NADH + (n+1) H(+)(in) = a plastoquinol + NAD(+) + n H(+)(out). It catalyses the reaction a plastoquinone + NADPH + (n+1) H(+)(in) = a plastoquinol + NADP(+) + n H(+)(out). In terms of biological role, NDH shuttles electrons from NAD(P)H:plastoquinone, via FMN and iron-sulfur (Fe-S) centers, to quinones in the photosynthetic chain and possibly in a chloroplast respiratory chain. The immediate electron acceptor for the enzyme in this species is believed to be plastoquinone. Couples the redox reaction to proton translocation, and thus conserves the redox energy in a proton gradient. This chain is NAD(P)H-quinone oxidoreductase subunit 3, chloroplastic, found in Chara vulgaris (Common stonewort).